Reading from the N-terminus, the 139-residue chain is Nucleoside diphosphate kinase (139 aa).

Lys11, Phe59, Arg87, Thr93, Arg104, and Asn114 together coordinate ATP. His117 acts as the Pros-phosphohistidine intermediate in catalysis.

It belongs to the NDK family. In terms of assembly, homotetramer. It depends on Mg(2+) as a cofactor.

It localises to the cytoplasm. It catalyses the reaction a 2'-deoxyribonucleoside 5'-diphosphate + ATP = a 2'-deoxyribonucleoside 5'-triphosphate + ADP. The enzyme catalyses a ribonucleoside 5'-diphosphate + ATP = a ribonucleoside 5'-triphosphate + ADP. Its function is as follows. Major role in the synthesis of nucleoside triphosphates other than ATP. The ATP gamma phosphate is transferred to the NDP beta phosphate via a ping-pong mechanism, using a phosphorylated active-site intermediate. The chain is Nucleoside diphosphate kinase from Wolbachia pipientis subsp. Culex pipiens (strain wPip).